We begin with the raw amino-acid sequence, 485 residues long: Aspartyl/glutamyl-tRNA(Asn/Gln) amidotransferase subunit B (485 aa).

It belongs to the GatB/GatE family. GatB subfamily. Heterotrimer of A, B and C subunits.

It catalyses the reaction L-glutamyl-tRNA(Gln) + L-glutamine + ATP + H2O = L-glutaminyl-tRNA(Gln) + L-glutamate + ADP + phosphate + H(+). The catalysed reaction is L-aspartyl-tRNA(Asn) + L-glutamine + ATP + H2O = L-asparaginyl-tRNA(Asn) + L-glutamate + ADP + phosphate + 2 H(+). Allows the formation of correctly charged Asn-tRNA(Asn) or Gln-tRNA(Gln) through the transamidation of misacylated Asp-tRNA(Asn) or Glu-tRNA(Gln) in organisms which lack either or both of asparaginyl-tRNA or glutaminyl-tRNA synthetases. The reaction takes place in the presence of glutamine and ATP through an activated phospho-Asp-tRNA(Asn) or phospho-Glu-tRNA(Gln). This Borreliella afzelii (strain PKo) (Borrelia afzelii) protein is Aspartyl/glutamyl-tRNA(Asn/Gln) amidotransferase subunit B.